Consider the following 304-residue polypeptide: MTKDIRTGDLVLCKVGSFPPWPAVVFPQRLLRNDVYRKRKSNCVAVCFFNDPTYYWEQPSRLKELDQDSIHNFILEHSKNANQRELVNAYKEAKNFDDFNVFLQEKFEEENRLSDLKAFEKSEGSKIVAGEDPFVGRTKVVNKRKKNSISIKEDPEDNQKSNEEESKPNIKPSKKKRPTANSGGKSNSGNKKKVKLDYSRRVEISQLFRRRIQRNLIQRETPPTEHEIKETHELLNRIYENSDTKRPFFDLKALRESKLHKLLKAIVNDPDLGEFHPLCKEILLSWADLITELKKEKLQALPTP.

A PWWP domain is found at 7–68; it reads TGDLVLCKVG…PSRLKELDQD (62 aa). Residues 145 to 195 are disordered; it reads KKNSISIKEDPEDNQKSNEEESKPNIKPSKKKRPTANSGGKSNSGNKKKVK. Positions 151–168 are enriched in basic and acidic residues; it reads IKEDPEDNQKSNEEESKP.

Component of the NuA3 histone acetyltransferase (HAT) complex. The NuA3 HAT complex has 2 functionally distinct forms that participate in transcription. The NuA3a HAT complex is composed of at least NTO1, SAS3, TAF14, YNG1 and EAF6. The NuA3b HAT complex contains an additional subunit, PDP3.

It is found in the nucleus. It localises to the cytoplasm. In terms of biological role, histone-binding component of the NuA3b histone acetyltransferase complex. Targets the NuA3b HAT complex via histone H3K36me3 to the coding regions of actively transcribed genes to coordinate transcription elongation. Stimulates elongation by RNA polymerase II in vitro. In Saccharomyces cerevisiae (strain ATCC 204508 / S288c) (Baker's yeast), this protein is NuA3 HAT complex component PDP3.